The chain runs to 388 residues: Succinate--CoA ligase [ADP-forming] subunit beta (388 aa).

Positions 9–244 constitute an ATP-grasp domain; sequence KQLFAEYGLP…PSQDDPREAH (236 aa). ATP is bound by residues K46, 53 to 55, E99, T102, and E107; that span reads GRG. Mg(2+)-binding residues include N199 and D213. Residues N264 and 321–323 contribute to the substrate site; that span reads GIV.

This sequence belongs to the succinate/malate CoA ligase beta subunit family. Heterotetramer of two alpha and two beta subunits. Mg(2+) is required as a cofactor.

It catalyses the reaction succinate + ATP + CoA = succinyl-CoA + ADP + phosphate. The enzyme catalyses GTP + succinate + CoA = succinyl-CoA + GDP + phosphate. The protein operates within carbohydrate metabolism; tricarboxylic acid cycle; succinate from succinyl-CoA (ligase route): step 1/1. Its function is as follows. Succinyl-CoA synthetase functions in the citric acid cycle (TCA), coupling the hydrolysis of succinyl-CoA to the synthesis of either ATP or GTP and thus represents the only step of substrate-level phosphorylation in the TCA. The beta subunit provides nucleotide specificity of the enzyme and binds the substrate succinate, while the binding sites for coenzyme A and phosphate are found in the alpha subunit. This is Succinate--CoA ligase [ADP-forming] subunit beta from Pseudomonas fluorescens (strain Pf0-1).